The chain runs to 276 residues: S-adenosylmethionine decarboxylase proenzyme (276 aa).

Serine 124 serves as the catalytic Schiff-base intermediate with substrate; via pyruvic acid. The residue at position 124 (serine 124) is a Pyruvic acid (Ser); by autocatalysis. Histidine 129 serves as the catalytic Proton acceptor; for processing activity. The Proton donor; for catalytic activity role is filled by cysteine 152.

The protein belongs to the prokaryotic AdoMetDC family. Type 2 subfamily. As to quaternary structure, heterooctamer of four alpha and four beta chains arranged as a tetramer of alpha/beta heterodimers. Pyruvate is required as a cofactor. In terms of processing, is synthesized initially as an inactive proenzyme. Formation of the active enzyme involves a self-maturation process in which the active site pyruvoyl group is generated from an internal serine residue via an autocatalytic post-translational modification. Two non-identical subunits are generated from the proenzyme in this reaction, and the pyruvate is formed at the N-terminus of the alpha chain, which is derived from the carboxyl end of the proenzyme. The post-translation cleavage follows an unusual pathway, termed non-hydrolytic serinolysis, in which the side chain hydroxyl group of the serine supplies its oxygen atom to form the C-terminus of the beta chain, while the remainder of the serine residue undergoes an oxidative deamination to produce ammonia and the pyruvoyl group blocking the N-terminus of the alpha chain.

The enzyme catalyses S-adenosyl-L-methionine + H(+) = S-adenosyl 3-(methylsulfanyl)propylamine + CO2. The protein operates within amine and polyamine biosynthesis; S-adenosylmethioninamine biosynthesis; S-adenosylmethioninamine from S-adenosyl-L-methionine: step 1/1. Functionally, catalyzes the decarboxylation of S-adenosylmethionine to S-adenosylmethioninamine (dcAdoMet), the propylamine donor required for the synthesis of the polyamines spermine and spermidine from the diamine putrescine. In Desulfitobacterium hafniense (strain Y51), this protein is S-adenosylmethionine decarboxylase proenzyme.